A 722-amino-acid chain; its full sequence is Golgin subfamily A member 5 (722 aa).

Over 1–689 the chain is Cytoplasmic; sequence MSWFTDLAGR…IFLRRYPIAR (689 aa). Disordered stretches follow at residues 90–158 and 194–215; these read TRSS…VKPI and TLSD…SHEL. The segment covering 91–109 has biased composition (low complexity); the sequence is RSSIESSHNSSVNVSSHRS. Positions 134-148 are enriched in basic and acidic residues; sequence DKVHSSSQKETRKES. A compositionally biased stretch (polar residues) spans 149–158; that stretch reads ASVNQAVKPI. Positions 195–209 are enriched in low complexity; it reads LSDSGSSASLSTTGD. The stretch at 211–622 forms a coiled coil; it reads KSHELSNLRL…LEHQLKNVQG (412 aa). A helical; Anchor for type IV membrane protein transmembrane segment spans residues 690–710; the sequence is VFIIIYMALLHLWVMIVLLTY. Over 711–722 the chain is Lumenal; it reads TPEMHHDTPSGK.

The protein resides in the golgi apparatus membrane. In terms of biological role, involved in maintaining Golgi structure. Stimulates the formation of Golgi stacks and ribbons. Involved in intra-Golgi retrograde transport. The chain is Golgin subfamily A member 5 (golga5) from Xenopus laevis (African clawed frog).